The sequence spans 352 residues: tRNA pseudouridine synthase D (352 aa).

The Nucleophile role is filled by Asp-81. The TRUD domain occupies Gly-157 to Leu-303.

Belongs to the pseudouridine synthase TruD family.

It catalyses the reaction uridine(13) in tRNA = pseudouridine(13) in tRNA. Responsible for synthesis of pseudouridine from uracil-13 in transfer RNAs. This chain is tRNA pseudouridine synthase D, found in Ectopseudomonas mendocina (strain ymp) (Pseudomonas mendocina).